The sequence spans 108 residues: Histone H4 (108 aa).

The interval Met1 to His24 is disordered. Residues Gly17–Ala21 mediate DNA binding.

It belongs to the histone H4 family. The nucleosome is a histone octamer containing two molecules each of H2A, H2B, H3 and H4 assembled in one H3-H4 heterotetramer and two H2A-H2B heterodimers. The octamer wraps approximately 147 bp of DNA.

The protein localises to the nucleus. It is found in the chromosome. Core component of nucleosome. Nucleosomes wrap and compact DNA into chromatin, limiting DNA accessibility to the cellular machineries which require DNA as a template. Histones thereby play a central role in transcription regulation, DNA repair, DNA replication and chromosomal stability. DNA accessibility is regulated via a complex set of post-translational modifications of histones, also called histone code, and nucleosome remodeling. The protein is Histone H4 of Mastigamoeba balamuthi (Phreatamoeba balamuthi).